Consider the following 217-residue polypeptide: Probable GTP-binding protein EngB (217 aa).

One can recognise an EngB-type G domain in the interval 27–201 (GGVEIAFAGR…AQTLSGWYLA (175 aa)). GTP-binding positions include 35–42 (GRSNAGKS), 62–66 (GRTQL), 80–83 (DLPG), 147–150 (TKAD), and 180–182 (FSS). Mg(2+) contacts are provided by serine 42 and threonine 64.

This sequence belongs to the TRAFAC class TrmE-Era-EngA-EngB-Septin-like GTPase superfamily. EngB GTPase family. Requires Mg(2+) as cofactor.

Functionally, necessary for normal cell division and for the maintenance of normal septation. The sequence is that of Probable GTP-binding protein EngB from Aeromonas salmonicida (strain A449).